The following is a 294-amino-acid chain: Protein farnesyltransferase/geranylgeranyltransferase type-1 subunit alpha (294 aa).

5 PFTA repeats span residues 57-91 (YSLR…HTPS), 92-125 (YIDN…SLTK), 126-160 (NYER…NFND), 161-194 (YSQE…ETSK), and 199-233 (SLEE…KSGP).

It belongs to the protein prenyltransferase subunit alpha family. Heterodimer of an alpha(cwp1) and a beta(cpp1 or cwg2) subunit. Requires Mg(2+) as cofactor.

It catalyses the reaction L-cysteinyl-[protein] + (2E,6E)-farnesyl diphosphate = S-(2E,6E)-farnesyl-L-cysteinyl-[protein] + diphosphate. The enzyme catalyses geranylgeranyl diphosphate + L-cysteinyl-[protein] = S-geranylgeranyl-L-cysteinyl-[protein] + diphosphate. Functionally, catalyzes the transfer of a farnesyl or geranyl-geranyl moiety from farnesyl or geranyl-geranyl diphosphate to a cysteine at the fourth position from the C-terminus of several proteins having the C-terminal sequence Cys-aliphatic-aliphatic-X. The alpha(cwp1) subunit is thought to participate in a stable complex with the substrate. The beta(cpp1 or cwg2) subunits bind the peptide substrate. The chain is Protein farnesyltransferase/geranylgeranyltransferase type-1 subunit alpha (cwp1) from Schizosaccharomyces pombe (strain 972 / ATCC 24843) (Fission yeast).